The chain runs to 163 residues: 2,3-dimethylmalate dehydratase small subunit (163 aa).

Belongs to the LeuD family. LeuD type 2 subfamily. In terms of assembly, heterodimer of a large and a small subunit.

The catalysed reaction is (2R,3S)-2,3-dimethylmalate = dimethylmaleate + H2O. It participates in cofactor degradation; nicotinate degradation; propanoate and pyruvate from 6-hydroxynicotinate: step 7/8. The sequence is that of 2,3-dimethylmalate dehydratase small subunit from Eubacterium barkeri (Clostridium barkeri).